The chain runs to 206 residues: N-(5'-phosphoribosyl)anthranilate isomerase (206 aa).

This sequence belongs to the TrpF family.

The enzyme catalyses N-(5-phospho-beta-D-ribosyl)anthranilate = 1-(2-carboxyphenylamino)-1-deoxy-D-ribulose 5-phosphate. Its pathway is amino-acid biosynthesis; L-tryptophan biosynthesis; L-tryptophan from chorismate: step 3/5. The sequence is that of N-(5'-phosphoribosyl)anthranilate isomerase from Pseudomonas putida (strain ATCC 47054 / DSM 6125 / CFBP 8728 / NCIMB 11950 / KT2440).